The primary structure comprises 195 residues: MEGRHDNSPTQAFDKDVLELTVEDVYDISYVIGRDLLKVNTGGNREISDLQFKIVRVLEMFETMVNKYNLSLEELRMEMDNMRTETDRVVAEGSSGNINTVGPNKLVVDLKDPNRPRFTMQELKEVLQERNKLKAQLLVAQEELQLYKSGVLSSQQNMVEVNLETVPQSEPLRSSITEESKEKSTIQKLFSFRPK.

The 85-residue stretch at serine 8–glutamate 92 folds into the RH1 domain. Residues leucine 58–serine 149 adopt a coiled-coil conformation. The RH2 domain occupies arginine 115–threonine 185.

The protein belongs to the RILPL family.

It is found in the cytoplasm. It localises to the cytosol. Its subcellular location is the cytoskeleton. The protein resides in the microtubule organizing center. The protein localises to the centrosome. It is found in the cell projection. It localises to the cilium. Functionally, involved in cell shape and neuronal morphogenesis, positively regulating the establishment and maintenance of dendritic spines. Plays a role in cellular protein transport. In Danio rerio (Zebrafish), this protein is RILP-like protein 2 (rilpl2).